An 81-amino-acid chain; its full sequence is Short neurotoxin 2 (81 aa).

A signal peptide spans 1 to 21 (MKTLLLTLVVVTIVCLDLGYT). 4 disulfide bridges follow: C24–C43, C38–C60, C62–C73, and C74–C79.

Belongs to the three-finger toxin family. Short-chain subfamily. Type I alpha-neurotoxin sub-subfamily. As to expression, expressed by the venom gland.

The protein resides in the secreted. Its function is as follows. Binds to muscle nicotinic acetylcholine receptor (nAChR) and inhibit acetylcholine from binding to the receptor, thereby impairing neuromuscular transmission. This chain is Short neurotoxin 2, found in Hydrophis peronii (Spiny-headed seasnake).